A 227-amino-acid chain; its full sequence is Protein FAM3C (227 aa).

Residues 1–24 (MRVAGAAKLVVAVAVFLLTFYVIS) form the signal peptide. Disulfide bonds link cysteine 58/cysteine 86 and cysteine 64/cysteine 221. The region spanning 67–225 (KHFAFKMASG…VEMEGCIPQK (159 aa)) is the GG-type lectin domain.

It belongs to the FAM3 family.

Its subcellular location is the secreted. The protein resides in the cytoplasmic vesicle. Its function is as follows. May be involved in retinal laminar formation. Promotes epithelial to mesenchymal transition. The chain is Protein FAM3C (FAM3C) from Bos taurus (Bovine).